A 435-amino-acid polypeptide reads, in one-letter code: Elongation factor 1-alpha (435 aa).

Positions 6-231 (KVHINLVVIG…DALEPPKRPV (226 aa)) constitute a tr-type G domain. A G1 region spans residues 15 to 22 (GHVDSGKS). 15-22 (GHVDSGKS) lines the GTP pocket. The segment at 71–75 (GITID) is G2. The G3 stretch occupies residues 92-95 (DAPG). GTP contacts are provided by residues 92 to 96 (DAPGH) and 154 to 157 (NKMD). The interval 154–157 (NKMD) is G4. The G5 stretch occupies residues 195 to 197 (SGF).

Belongs to the TRAFAC class translation factor GTPase superfamily. Classic translation factor GTPase family. EF-Tu/EF-1A subfamily.

The protein resides in the cytoplasm. Its function is as follows. This protein promotes the GTP-dependent binding of aminoacyl-tRNA to the A-site of ribosomes during protein biosynthesis. This is Elongation factor 1-alpha from Tetrahymena pyriformis.